We begin with the raw amino-acid sequence, 333 residues long: Plasminogen (333 aa).

The region spanning 4-83 (CMFGNGKGYR…LFDYCDVPQC (80 aa)) is the Kringle 5 domain. Cystine bridges form between Cys4-Cys83, Cys25-Cys66, Cys54-Cys78, Cys90-Cys208, Cys100-Cys108, Cys130-Cys146, Cys222-Cys289, Cys252-Cys268, and Cys279-Cys307. Residues 104–331 (VVGGCVANPH…FVTWIEGIMR (228 aa)) form the Peptidase S1 domain. At Ser120 the chain carries Phosphoserine. Catalysis depends on charge relay system residues His145 and Asp188. The active-site Charge relay system is Ser283.

This sequence belongs to the peptidase S1 family. Plasminogen subfamily. As to quaternary structure, interacts with CSPG4 and AMOT. Interacts (via the Kringle domains) with HRG; the interaction tethers PLG to the cell surface and enhances its activation. Interacts (via Kringle 4 domain) with ADA; the interaction stimulates PLG activation when in complex with DPP4. Angiostatin: Interacts with ATP5F1A; the interaction inhibits most of the angiogenic effects of angiostatin.

The protein localises to the secreted. The catalysed reaction is Preferential cleavage: Lys-|-Xaa &gt; Arg-|-Xaa, higher selectivity than trypsin. Converts fibrin into soluble products.. Converted into plasmin by plasminogen activators, both plasminogen and its activator being bound to fibrin. Activated with urokinase and high concentrations of streptokinase. Functionally, plasmin dissolves the fibrin of blood clots and acts as a proteolytic factor in a variety of other processes including embryonic development, tissue remodeling, tumor invasion, and inflammation. In ovulation, weakens the walls of the Graafian follicle. It activates the urokinase-type plasminogen activator, collagenases and several complement zymogens, such as C1, C4 and C5. Cleavage of fibronectin and laminin leads to cell detachment and apoptosis. Also cleaves fibrin, thrombospondin and von Willebrand factor. Its role in tissue remodeling and tumor invasion may be modulated by CSPG4. Binds to cells. This is Plasminogen (PLG) from Canis lupus familiaris (Dog).